Consider the following 895-residue polypeptide: MTEESEETVLYIEHRYVCSECNQLYGSLEEVLMHQNSHVPQQHFELVGVADPGVTVATDTASGTGLYQTLVQESQYQCLECGQLLMSPSQLLEHQELHLKMMAPQEAVPAEPPPKAPPLSSSTIHYECVDCKALFASQELWLNHRQTHLRATPTKAPAPVVLGSPVVLGPPVGQARVAVEHSYRKAEEGGEGATVPSAAATTTEVVTEVELLLYKCSECSQLFQLPADFLEHQATHFPAPVPESQEPALQQEVQASSPAEVPVSQPDPLPASDHSYELRNGEAIGRDRRGRRARRNNSGEAGGAATQELFCSACDQLFLSPHQLQQHLRSHREGVFKCPLCSRVFPSPSSLDQHLGDHSSESHFLCVDCGLAFGTEALLLAHRRAHTPNPLHSCPCGKTFVNLTKFLYHRRTHGVGGVPLPTTPVPPEEPVIGFPEPAPAETGEPEAPEPPVSEETSAGPAAPGTYRCLLCSREFGKALQLTRHQRFVHRLERRHKCSICGKMFKKKSHVRNHLRTHTGERPFPCPDCSKPFNSPANLARHRLTHTGERPYRCGDCGKAFTQSSTLRQHRLVHAQHFPYRCQECGVRFHRPYRLLMHRYHHTGEYPYKCRECPRSFLLRRLLEVHQLVVHAGRQPHRCPSCGAAFPSSLRLREHRCAAAAAQAPRRFECGTCGKKVGSAARLQAHEAAHAAAGPGEVLAKEPPAPRAPRATRAPVASPAALGGTATASPAPARRRGLECSECKKLFSTETSLQVHRRIHTGERPYPCPDCGKAFRQSTHLKDHRRLHTGERPFACEVCGKAFAISMRLAEHRRIHTGERPYSCPDCGKSYRSFSNLWKHRKTHQQQHQAAVRQQLAEAEAAVGLAVMETAVEALPLVEAIEIYPLAEAEGVQISG.

C2H2-type zinc fingers lie at residues 16–38 (YVCS…QNSH), 76–98 (YQCL…QELH), and 126–148 (YECV…RQTH). Serine 164 is subject to Phosphoserine. Residues 214–236 (YKCSECSQLFQLPADFLEHQATH) form a C2H2-type 4 zinc finger. Positions 239 to 301 (APVPESQEPA…RARRNNSGEA (63 aa)) are disordered. The segment covering 247–257 (PALQQEVQASS) has biased composition (polar residues). A compositionally biased stretch (basic and acidic residues) spans 274-287 (HSYELRNGEAIGRD). Phosphoserine is present on serine 298. 4 consecutive C2H2-type zinc fingers follow at residues 309-331 (LFCS…LRSH), 336-358 (FKCP…LGDH), 364-386 (FLCV…RRAH), and 392-413 (HSCP…RRTH). The disordered stretch occupies residues 434–460 (FPEPAPAETGEPEAPEPPVSEETSAGP). 6 consecutive C2H2-type zinc fingers follow at residues 466-489 (YRCL…RFVH), 495-517 (HKCS…LRTH), 523-545 (FPCP…RLTH), 551-573 (YRCG…RLVH), 579-601 (YRCQ…RYHH), and 607-630 (YKCR…LVVH). The segment at 636–659 (HRCPSCGAAFPSSLRLREHRCAAA) adopts a C2H2-type 15; degenerate zinc-finger fold. Residues 667 to 689 (FECGTCGKKVGSAARLQAHEAAH) form a C2H2-type 16 zinc finger. The tract at residues 687-732 (AAHAAAGPGEVLAKEPPAPRAPRATRAPVASPAALGGTATASPAPA) is disordered. The segment covering 707 to 731 (APRATRAPVASPAALGGTATASPAP) has biased composition (low complexity). Serine 717 bears the Phosphoserine mark. Position 724 is a phosphothreonine (threonine 724). Serine 728 is modified (phosphoserine). 4 consecutive C2H2-type zinc fingers follow at residues 737–759 (LECS…RRIH), 765–787 (YPCP…RRLH), 793–815 (FACE…RRIH), and 821–843 (YSCP…RKTH). Arginine 831 bears the Asymmetric dimethylarginine mark.

This sequence belongs to the krueppel C2H2-type zinc-finger protein family.

It localises to the nucleus. In terms of biological role, may be involved in transcriptional regulation. The polypeptide is Zinc finger protein 574 (ZNF574) (Pongo abelii (Sumatran orangutan)).